The sequence spans 492 residues: UDP-N-acetylmuramoyl-L-alanyl-D-glutamate--2,6-diaminopimelate ligase (492 aa).

Position 21 (serine 21) interacts with UDP-N-acetyl-alpha-D-muramoyl-L-alanyl-D-glutamate. 98–104 (GTNGKSS) serves as a coordination point for ATP. UDP-N-acetyl-alpha-D-muramoyl-L-alanyl-D-glutamate is bound by residues 144 to 145 (TT), serine 171, glutamine 177, and arginine 179. Lysine 211 is subject to N6-carboxylysine. Residues arginine 372, 396–399 (DNPR), glycine 446, and glutamate 450 each bind meso-2,6-diaminopimelate. Positions 396-399 (DNPR) match the Meso-diaminopimelate recognition motif motif.

This sequence belongs to the MurCDEF family. MurE subfamily. It depends on Mg(2+) as a cofactor. In terms of processing, carboxylation is probably crucial for Mg(2+) binding and, consequently, for the gamma-phosphate positioning of ATP.

The protein localises to the cytoplasm. It catalyses the reaction UDP-N-acetyl-alpha-D-muramoyl-L-alanyl-D-glutamate + meso-2,6-diaminopimelate + ATP = UDP-N-acetyl-alpha-D-muramoyl-L-alanyl-gamma-D-glutamyl-meso-2,6-diaminopimelate + ADP + phosphate + H(+). It functions in the pathway cell wall biogenesis; peptidoglycan biosynthesis. In terms of biological role, catalyzes the addition of meso-diaminopimelic acid to the nucleotide precursor UDP-N-acetylmuramoyl-L-alanyl-D-glutamate (UMAG) in the biosynthesis of bacterial cell-wall peptidoglycan. The sequence is that of UDP-N-acetylmuramoyl-L-alanyl-D-glutamate--2,6-diaminopimelate ligase from Rickettsia typhi (strain ATCC VR-144 / Wilmington).